The sequence spans 444 residues: Cerebral cavernous malformations 2 protein (444 aa).

The interval 1-37 (MEEEGKKGKKPGIVSPFKRVFLKGEKSRDKKAHEKVT) is disordered. A Phosphoserine modification is found at Ser15. Positions 22-37 (LKGEKSRDKKAHEKVT) are enriched in basic and acidic residues. In terms of domain architecture, PID spans 59–248 (LSDYIEKEVK…TPTHHLSLHS (190 aa)). Phosphoserine is present on Ser164. Residues 283–376 (SKTISESELS…NFLETIGVKD (94 aa)) are harmonin homology domain. Residues Ser384 and Ser393 each carry the phosphoserine modification. The disordered stretch occupies residues 391–423 (ALSTTSSSTTNGNRATGSSDDRSAPSEGDEWDR). Residues 392–408 (LSTTSSSTTNGNRATGS) are compositionally biased toward low complexity. Thr394 is modified (phosphothreonine). Position 396 is a phosphoserine (Ser396). At Thr399 the chain carries Phosphothreonine.

The protein belongs to the CCM2 family. As to quaternary structure, part of a complex with MAP2K3, MAP3K3 and RAC1. Binds RAC1 directly and independently of its nucleotide-bound state. Interacts with HEG1 and KRIT1; KRIT1 greatly facilitates the interaction with HEG1. Interacts with PDCD10.

The protein localises to the cytoplasm. Its function is as follows. Component of the CCM signaling pathway which is a crucial regulator of heart and vessel formation and integrity. May act through the stabilization of endothelial cell junctions. May function as a scaffold protein for MAP2K3-MAP3K3 signaling. Seems to play a major role in the modulation of MAP3K3-dependent p38 activation induced by hyperosmotic shock. In Homo sapiens (Human), this protein is Cerebral cavernous malformations 2 protein (CCM2).